The primary structure comprises 142 residues: Large ribosomal subunit protein uL11 (142 aa).

This sequence belongs to the universal ribosomal protein uL11 family. Part of the ribosomal stalk of the 50S ribosomal subunit. Interacts with L10 and the large rRNA to form the base of the stalk. L10 forms an elongated spine to which L12 dimers bind in a sequential fashion forming a multimeric L10(L12)X complex. One or more lysine residues are methylated.

In terms of biological role, forms part of the ribosomal stalk which helps the ribosome interact with GTP-bound translation factors. In Hamiltonella defensa subsp. Acyrthosiphon pisum (strain 5AT), this protein is Large ribosomal subunit protein uL11.